The sequence spans 350 residues: MIEQLNEILNSFKTKLKSVKDLNDWEELKKEFIGKDSNLTTILKSIKTISNEQKQEIGKLANQIRTTIIDNLNNKQEELKNKELLIKLEKEKIDVSLKNSSLKFGSKHVLNIVIEEISDIFTEIGFEMVSGTEIESDLYNFQKLNLPLDHPARDMQDTFYLDNNLVLRTHCTNMTSRMLTKLASLKTDDNNLAVISYGNVYRRDDDDATHSHQFMQIDGFVVGNKISFANLKWILKYMCQRLFNKDINIRLRPSYFPFTEPSVEVDVSCFKCDSKGCFICKKTGWIEILGAGMINEHVLKLNGLDPTKCSGLAFGIGIERIAMLKFNISNIRNFYENNVKFLEQFKFYSE.

Glu-260 serves as a coordination point for Mg(2+).

The protein belongs to the class-II aminoacyl-tRNA synthetase family. Phe-tRNA synthetase alpha subunit type 1 subfamily. As to quaternary structure, tetramer of two alpha and two beta subunits. It depends on Mg(2+) as a cofactor.

It is found in the cytoplasm. The catalysed reaction is tRNA(Phe) + L-phenylalanine + ATP = L-phenylalanyl-tRNA(Phe) + AMP + diphosphate + H(+). This is Phenylalanine--tRNA ligase alpha subunit from Mycoplasma capricolum subsp. capricolum (strain California kid / ATCC 27343 / NCTC 10154).